A 281-amino-acid chain; its full sequence is Large ribosomal subunit protein uL2 (281 aa).

The interval 223-255 (TVRGSVMNPNDHPHGGGEGRAPIGRKSPVTPWG) is disordered.

It belongs to the universal ribosomal protein uL2 family. In terms of assembly, part of the 50S ribosomal subunit. Forms a bridge to the 30S subunit in the 70S ribosome.

Its function is as follows. One of the primary rRNA binding proteins. Required for association of the 30S and 50S subunits to form the 70S ribosome, for tRNA binding and peptide bond formation. It has been suggested to have peptidyltransferase activity; this is somewhat controversial. Makes several contacts with the 16S rRNA in the 70S ribosome. The protein is Large ribosomal subunit protein uL2 of Mycoplasma capricolum subsp. capricolum (strain California kid / ATCC 27343 / NCTC 10154).